Consider the following 564-residue polypeptide: Sphingomyelin phosphodiesterase 1 (564 aa).

Residues 1–17 (MRIIYLISTVLLIYTNA) form the signal peptide. In terms of domain architecture, Saposin B-type spans 37 to 121 (FQPLCISCTG…IILPDCADPT (85 aa)). Cystine bridges form between cysteine 41/cysteine 117, cysteine 44/cysteine 110, and cysteine 72/cysteine 83. Residue asparagine 151 is glycosylated (N-linked (GlcNAc...) asparagine). 2 residues coordinate Zn(2+): aspartate 165 and histidine 167. 2 disulfides stabilise this stretch: cysteine 180–cysteine 185 and cysteine 186–cysteine 206. An N-linked (GlcNAc...) asparagine glycan is attached at asparagine 221. 2 residues coordinate Zn(2+): aspartate 234 and asparagine 274. A disulfide bridge connects residues cysteine 341 and cysteine 389. The N-linked (GlcNAc...) asparagine glycan is linked to asparagine 351. Residues histidine 381, histidine 415, and histidine 417 each coordinate Zn(2+). Asparagine 430 is a glycosylation site (N-linked (GlcNAc...) asparagine). 2 cysteine pairs are disulfide-bonded: cysteine 538–cysteine 542 and cysteine 548–cysteine 561. Asparagine 556 is a glycosylation site (N-linked (GlcNAc...) asparagine).

It belongs to the acid sphingomyelinase family. Zn(2+) serves as cofactor.

It localises to the secreted. It catalyses the reaction a sphingomyelin + H2O = phosphocholine + an N-acylsphing-4-enine + H(+). The catalysed reaction is an N-acyl-15-methylhexadecasphing-4-enine-1-phosphocholine + H2O = an N-acyl-15-methylhexadecasphing-4-enine + phosphocholine + H(+). The protein operates within lipid metabolism; sphingolipid metabolism. In terms of biological role, sphingomyelin phosphodiesterase (sphingomyelinase) that converts sphingomyelin to ceramide (N-acyl-sphingoid base) and phosphocholine at acidic pH. Displays its enzymatic activity when secreted. May play distinct roles in signaling. The chain is Sphingomyelin phosphodiesterase 1 (asm-1) from Caenorhabditis elegans.